The sequence spans 31 residues: Aspartate aminotransferase, cytoplasmic (31 aa).

It belongs to the class-I pyridoxal-phosphate-dependent aminotransferase family. In terms of assembly, homodimer. Pyridoxal 5'-phosphate is required as a cofactor.

The protein localises to the cytoplasm. It carries out the reaction L-aspartate + 2-oxoglutarate = oxaloacetate + L-glutamate. The catalysed reaction is L-cysteine + 2-oxoglutarate = 2-oxo-3-sulfanylpropanoate + L-glutamate. It catalyses the reaction (2S)-2-aminobutanoate + 2-oxoglutarate = 2-oxobutanoate + L-glutamate. The enzyme catalyses 3-sulfino-L-alanine + 2-oxoglutarate = 3-sulfinopyruvate + L-glutamate. Its function is as follows. Biosynthesis of L-glutamate from L-aspartate or L-cysteine. Important regulator of levels of glutamate, the major excitatory neurotransmitter of the vertebrate central nervous system. Acts as a scavenger of glutamate in brain neuroprotection. The aspartate aminotransferase activity is involved in hepatic glucose synthesis during development and in adipocyte glyceroneogenesis. Using L-cysteine as substrate, regulates levels of mercaptopyruvate, an important source of hydrogen sulfide. Mercaptopyruvate is converted into H(2)S via the action of 3-mercaptopyruvate sulfurtransferase (3MST). Hydrogen sulfide is an important synaptic modulator and neuroprotectant in the brain. The sequence is that of Aspartate aminotransferase, cytoplasmic from Oryctolagus cuniculus (Rabbit).